The primary structure comprises 213 residues: Macrodontain-1 (213 aa).

Disulfide bonds link cysteine 23–cysteine 63, cysteine 57–cysteine 96, and cysteine 153–cysteine 201. Cysteine 26 is an active-site residue. Catalysis depends on residues histidine 159 and asparagine 176.

In terms of assembly, monomer. Fruits.

Its activity is regulated as follows. Inhibited by the general cysteine protease inhibitor E64 (L-trans-epoxysuccinyl-leucylamide-(4-guanido)-butane). Its function is as follows. Cysteine protease that catalyzes the preferential cleavage: Ala-|-Xaa &gt; Gln-|-Xaa &gt; Tyr-Xaa &gt;&gt; Leu-|-Xaa &gt; Gly-|-Xaa. Hydrolyzes the synthetic peptide substrate Bz-Phe-Val-Arg-pNA. This is Macrodontain-1 from Ananas macrodontes (False pineapple).